Consider the following 451-residue polypeptide: Trigger factor (451 aa).

Residues 165–250 (DDKLTIDFEG…LHQIQAREAL (86 aa)) form the PPIase FKBP-type domain.

It belongs to the FKBP-type PPIase family. Tig subfamily.

Its subcellular location is the cytoplasm. It catalyses the reaction [protein]-peptidylproline (omega=180) = [protein]-peptidylproline (omega=0). In terms of biological role, involved in protein export. Acts as a chaperone by maintaining the newly synthesized protein in an open conformation. Functions as a peptidyl-prolyl cis-trans isomerase. In Helicobacter pylori (strain HPAG1), this protein is Trigger factor.